The primary structure comprises 116 residues: Iron-sulfur cluster insertion protein ErpA (116 aa).

3 residues coordinate iron-sulfur cluster: cysteine 44, cysteine 108, and cysteine 110.

Belongs to the HesB/IscA family. As to quaternary structure, homodimer. Iron-sulfur cluster serves as cofactor.

Required for insertion of 4Fe-4S clusters for at least IspG. The sequence is that of Iron-sulfur cluster insertion protein ErpA from Pseudomonas fluorescens (strain ATCC BAA-477 / NRRL B-23932 / Pf-5).